Consider the following 486-residue polypeptide: Solute carrier family 2, facilitated glucose transporter member 5 (486 aa).

Met-1 carries the post-translational modification N-acetylmethionine. The Cytoplasmic segment spans residues Met-1–Ala-19. Residues Leu-20–Cys-40 form a helical membrane-spanning segment. Tyr-33 is a D-fructose binding site. At Asn-41 to Thr-69 the chain is on the extracellular side. Residue Asn-52 is glycosylated (N-linked (GlcNAc...) asparagine). Residues Leu-70–Pro-92 form a helical membrane-spanning segment. Residues Leu-93–Arg-99 are Cytoplasmic-facing. A helical membrane pass occupies residues Lys-100–Ser-120. Residues Lys-121 to Glu-127 are Extracellular-facing. A helical transmembrane segment spans residues Leu-128–Tyr-150. Over Leu-151–Ala-162 the chain is Cytoplasmic. The helical transmembrane segment at Leu-163–Leu-183 threads the bilayer. A D-fructose-binding site is contributed by Gln-168. The Extracellular segment spans residues Arg-184–Trp-192. Residues Pro-193 to Phe-211 form a helical membrane-spanning segment. Residues Pro-212–Gln-274 are Cytoplasmic-facing. A helical membrane pass occupies residues Leu-275–Tyr-294. Residues Gln-284 and Ile-292–Tyr-294 each bind D-fructose. The Extracellular segment spans residues Tyr-295–Asp-306. The chain crosses the membrane as a helical span at residues Thr-307–Phe-327. The Cytoplasmic portion of the chain corresponds to Val-328–Arg-334. A helical membrane pass occupies residues Leu-335–Leu-355. Over Ala-356–Trp-363 the chain is Extracellular. The chain crosses the membrane as a helical span at residues Met-364–Ile-385. His-379 serves as a coordination point for D-fructose. Topologically, residues Arg-386–Trp-402 are cytoplasmic. The chain crosses the membrane as a helical span at residues Trp-403–Ile-421. His-407–Trp-408 contacts D-fructose. Residues Gln-422 to Leu-426 lie on the Extracellular side of the membrane. The chain crosses the membrane as a helical span at residues Tyr-427–Val-447. Residues Pro-448 to Glu-486 lie on the Cytoplasmic side of the membrane.

Belongs to the major facilitator superfamily. Sugar transporter (TC 2.A.1.1) family. Glucose transporter subfamily. Detected in jejunum. Detected at the intestinal brush-border membrane (at protein level). Detected in duodenum, jejunum and kidney.

The protein localises to the apical cell membrane. Its subcellular location is the cell membrane. It localises to the sarcolemma. The catalysed reaction is D-fructose(out) = D-fructose(in). In terms of biological role, functions as a fructose transporter that has only low activity with other monosaccharides. Can mediate the uptake of deoxyglucose, but with low efficiency. Essential for fructose uptake in the small intestine. Plays a role in the regulation of salt uptake and blood pressure in response to dietary fructose. Required for the development of high blood pressure in response to high dietary fructose intake. This Oryctolagus cuniculus (Rabbit) protein is Solute carrier family 2, facilitated glucose transporter member 5.